The chain runs to 159 residues: NADH-quinone oxidoreductase subunit B (159 aa).

[4Fe-4S] cluster is bound by residues cysteine 32, cysteine 33, cysteine 97, and cysteine 126.

It belongs to the complex I 20 kDa subunit family. NDH-1 is composed of 14 different subunits. Subunits NuoB, C, D, E, F, and G constitute the peripheral sector of the complex. Requires [4Fe-4S] cluster as cofactor.

It localises to the cell inner membrane. It catalyses the reaction a quinone + NADH + 5 H(+)(in) = a quinol + NAD(+) + 4 H(+)(out). NDH-1 shuttles electrons from NADH, via FMN and iron-sulfur (Fe-S) centers, to quinones in the respiratory chain. The immediate electron acceptor for the enzyme in this species is believed to be ubiquinone. Couples the redox reaction to proton translocation (for every two electrons transferred, four hydrogen ions are translocated across the cytoplasmic membrane), and thus conserves the redox energy in a proton gradient. This chain is NADH-quinone oxidoreductase subunit B, found in Helicobacter pylori (strain J99 / ATCC 700824) (Campylobacter pylori J99).